We begin with the raw amino-acid sequence, 609 residues long: Pescadillo homolog (609 aa).

A BRCT domain is found at 320–413 (KLKNLFKGLK…KLLPTNKYFI (94 aa)). Disordered stretches follow at residues 443–462 (DEFE…DEDF) and 488–609 (ALNS…EILA). Composition is skewed to basic and acidic residues over residues 444-453 (EFEKQERAEG) and 488-498 (ALNSGEAKKEQ). Residues 481-509 (FREEKAEALNSGEAKKEQAEEDNEDDDQE) adopt a coiled-coil conformation. Acidic residues predominate over residues 499–512 (AEEDNEDDDQEPDQ). 2 stretches are compositionally biased toward basic and acidic residues: residues 513–524 (DETKKQRSEKKQ) and 533–552 (VFKE…EALR). Positions 539 to 607 (KEQKQLTKQE…QKRKAQRKEI (69 aa)) form a coiled coil. A compositionally biased stretch (basic residues) spans 554–564 (KMVKSRHKKLY). Residues 567–609 (LLDKQKKATKEANLLREKRQQIDKQKRKEQTQKRKAQRKEILA) show a composition bias toward basic and acidic residues.

This sequence belongs to the pescadillo family.

The protein resides in the nucleus. It localises to the nucleolus. Its subcellular location is the nucleoplasm. Functionally, required for maturation of ribosomal RNAs and formation of the large ribosomal subunit. This is Pescadillo homolog from Aedes aegypti (Yellowfever mosquito).